Consider the following 205-residue polypeptide: GTP cyclohydrolase 1 (205 aa).

Zn(2+) contacts are provided by cysteine 95, histidine 98, and cysteine 166.

This sequence belongs to the GTP cyclohydrolase I family. As to quaternary structure, toroid-shaped homodecamer, composed of two pentamers of five dimers.

It carries out the reaction GTP + H2O = 7,8-dihydroneopterin 3'-triphosphate + formate + H(+). It functions in the pathway cofactor biosynthesis; 7,8-dihydroneopterin triphosphate biosynthesis; 7,8-dihydroneopterin triphosphate from GTP: step 1/1. In Maricaulis maris (strain MCS10) (Caulobacter maris), this protein is GTP cyclohydrolase 1.